The following is a 112-amino-acid chain: Signal peptidase complex-like protein DTM1 (112 aa).

The signal sequence occupies residues 1 to 25 (MGRDEMLRRSLVALAAAVVVTGVVT). Transmembrane regions (helical) follow at residues 33 to 53 (ATYG…WEFF) and 92 to 112 (MAML…YVSS).

This sequence belongs to the SPCS1 family.

The protein localises to the endoplasmic reticulum membrane. Functions in tapetum development during early meiosis. May play a role in the endoplasmic reticulum (ER) membrane in the early stages of tapetum development in anthers. Seems to function after MSP1 and before UDT1. This chain is Signal peptidase complex-like protein DTM1, found in Oryza sativa subsp. japonica (Rice).